The following is a 143-amino-acid chain: Nucleoside diphosphate kinase (143 aa).

ATP contacts are provided by K11, F59, R87, T93, R104, and N114. H117 functions as the Pros-phosphohistidine intermediate in the catalytic mechanism.

Belongs to the NDK family. As to quaternary structure, homotetramer. Mg(2+) is required as a cofactor.

It is found in the cytoplasm. The enzyme catalyses dZDP + ATP = dZTP + ADP. It catalyses the reaction a 2'-deoxyribonucleoside 5'-diphosphate + ATP = a 2'-deoxyribonucleoside 5'-triphosphate + ADP. It carries out the reaction a ribonucleoside 5'-diphosphate + ATP = a ribonucleoside 5'-triphosphate + ADP. It participates in purine metabolism. Its function is as follows. Major role in the synthesis of nucleoside triphosphates other than ATP. The ATP gamma phosphate is transferred to the NDP beta phosphate via a ping-pong mechanism, using a phosphorylated active-site intermediate. Functionally, (Microbial infection) Catalyzes the phosphorylation of dZDP to dZTP, when the bacterium is infected by a phage that produces the substrate for the synthesis of dZTP (2- amino-2'-deoxyadenosine 5'-triphosphate), which is then used by the phage as a DNA polymerase substrate. The sequence is that of Nucleoside diphosphate kinase from Salmonella paratyphi C (strain RKS4594).